Here is a 400-residue protein sequence, read N- to C-terminus: Coiled-coil domain-containing glutamate-rich protein 1 (400 aa).

The segment covering 1–11 (MTQTVNEREDP) has biased composition (basic and acidic residues). 3 disordered regions span residues 1–68 (MTQT…IPGP), 134–164 (RPPG…PPID), and 203–353 (QEKL…DKFL). Basic residues predominate over residues 31–45 (YHRRQRGAPMSKRRY). A compositionally biased stretch (basic and acidic residues) spans 46 to 57 (RDGPKTEYEAPR). A compositionally biased stretch (basic residues) spans 137-157 (GRKKRWGRRGRGLRRHPRRSF). The segment covering 209-220 (QQAALRAHQAQA) has biased composition (low complexity). Over residues 255–271 (PSLTFSPAPGQQNQSPT) the composition is skewed to polar residues. A compositionally biased stretch (acidic residues) spans 275–347 (VEEEEKNVDD…EAGLEEGEQR (73 aa)). A coiled-coil region spans residues 299-335 (EEEEVDGESEDEDVDEEEVEEAGNGEEREEDQEEEDV).

It localises to the nucleus. Its function is as follows. Regulator of histone epigenetic modifications and chromatin compaction into the sperm head, required for histone-to-protamine (HTP) transition. HTP is a key event in which somatic histones are first replaced by testis-specific histone variants, then transition proteins (TNPs) are incorporated into the spermatid nucleus, and finally protamines (PRMs) replace the TNPs to promote chromatin condensation. The polypeptide is Coiled-coil domain-containing glutamate-rich protein 1 (Ccer1) (Rattus norvegicus (Rat)).